A 446-amino-acid chain; its full sequence is MITIKKGLDLPIAGTPSQVINDGKTIKKVALLGEEYVGMRPTMHVRVGDEVKKAQILFEDKKNPGVKFTAPAAGKVIEVNRGAKRVLQSVVIEVAGEEQVTFDKFEAAQLSGLDREVIKTQLVESGLWTALRTRPFSKVPAIESATKAIFVTAMDTNPLAAKPELIINEQQEAFIAGLDILSALTEGKVYVCKSGTSLPRSSQSNVEEHVFDGPHPAGLAGTHMHFLYPVNAENVAWSINYQDVIAFGKLFLTGELYTDRVISLAGPVVNNPRLVRTVMGASLDDLTDSELMPGEVRVISGSVLTGTHATGPHAYLGRYHQQVSVLREGREKELLGWAMPGKNKFSVTRSFLGHLFKGQLFNMTTSTNGSDRSMVPIGSYERVMPLDMEPTLLLRDLCAGDSDSAQALGALELDEEDLALCTFVCPGKYEYGQLLRECLDKIEKEG.

The protein belongs to the NqrA family. As to quaternary structure, composed of six subunits; NqrA, NqrB, NqrC, NqrD, NqrE and NqrF.

It catalyses the reaction a ubiquinone + n Na(+)(in) + NADH + H(+) = a ubiquinol + n Na(+)(out) + NAD(+). In terms of biological role, NQR complex catalyzes the reduction of ubiquinone-1 to ubiquinol by two successive reactions, coupled with the transport of Na(+) ions from the cytoplasm to the periplasm. NqrA to NqrE are probably involved in the second step, the conversion of ubisemiquinone to ubiquinol. This Vibrio parahaemolyticus serotype O3:K6 (strain RIMD 2210633) protein is Na(+)-translocating NADH-quinone reductase subunit A.